The primary structure comprises 133 residues: Fatty acid-binding protein, heart (133 aa).

N-acetylalanine is present on alanine 2. A Phosphothreonine modification is found at threonine 8. Residue tyrosine 20 is modified to Phosphotyrosine; by Tyr-kinases. Serine 23 carries the post-translational modification Phosphoserine. Threonine 30 carries the phosphothreonine modification. Serine 83 is subject to Phosphoserine. 127 to 129 (RTY) is a binding site for (9Z)-octadecenoate. 127-129 (RTY) is a binding site for hexadecanoate. 127–129 (RTY) is an octadecanoate binding site.

Belongs to the calycin superfamily. Fatty-acid binding protein (FABP) family.

It localises to the cytoplasm. Its function is as follows. FABPs are thought to play a role in the intracellular transport of long-chain fatty acids and their acyl-CoA esters. This Mus musculus (Mouse) protein is Fatty acid-binding protein, heart (Fabp3).